Reading from the N-terminus, the 54-residue chain is MIVDFYSNTLRHCETLRSQPCSLFSSLYARSFQSSCTLHVAEPSPGFHMYGCHT.

This is an uncharacterized protein from Saccharomyces cerevisiae (strain ATCC 204508 / S288c) (Baker's yeast).